A 295-amino-acid chain; its full sequence is Probable deoxyhypusine synthase (295 aa).

The active-site Nucleophile is the Lys-267.

The protein belongs to the deoxyhypusine synthase family. The cofactor is NAD(+).

It catalyses the reaction [eIF5A protein]-L-lysine + spermidine = [eIF5A protein]-deoxyhypusine + propane-1,3-diamine. It functions in the pathway protein modification; eIF5A hypusination. Functionally, catalyzes the NAD-dependent oxidative cleavage of spermidine and the subsequent transfer of the butylamine moiety of spermidine to the epsilon-amino group of a specific lysine residue of the eIF-5A precursor protein to form the intermediate deoxyhypusine residue. This chain is Probable deoxyhypusine synthase, found in Pyrobaculum calidifontis (strain DSM 21063 / JCM 11548 / VA1).